A 158-amino-acid polypeptide reads, in one-letter code: 6,7-dimethyl-8-ribityllumazine synthase (158 aa).

5-amino-6-(D-ribitylamino)uracil-binding positions include F22, A57–E59, and A81–I83. Residue G86–T87 coordinates (2S)-2-hydroxy-3-oxobutyl phosphate. The Proton donor role is filled by H89. Position 114 (F114) interacts with 5-amino-6-(D-ribitylamino)uracil. (2S)-2-hydroxy-3-oxobutyl phosphate is bound at residue R128.

The protein belongs to the DMRL synthase family. Forms an icosahedral capsid composed of 60 subunits, arranged as a dodecamer of pentamers.

It carries out the reaction (2S)-2-hydroxy-3-oxobutyl phosphate + 5-amino-6-(D-ribitylamino)uracil = 6,7-dimethyl-8-(1-D-ribityl)lumazine + phosphate + 2 H2O + H(+). The protein operates within cofactor biosynthesis; riboflavin biosynthesis; riboflavin from 2-hydroxy-3-oxobutyl phosphate and 5-amino-6-(D-ribitylamino)uracil: step 1/2. In terms of biological role, catalyzes the formation of 6,7-dimethyl-8-ribityllumazine by condensation of 5-amino-6-(D-ribitylamino)uracil with 3,4-dihydroxy-2-butanone 4-phosphate. This is the penultimate step in the biosynthesis of riboflavin. The chain is 6,7-dimethyl-8-ribityllumazine synthase from Shewanella putrefaciens (strain CN-32 / ATCC BAA-453).